We begin with the raw amino-acid sequence, 257 residues long: UPF0246 protein RSc2009 (257 aa).

The protein belongs to the UPF0246 family.

The protein is UPF0246 protein RSc2009 of Ralstonia nicotianae (strain ATCC BAA-1114 / GMI1000) (Ralstonia solanacearum).